The primary structure comprises 138 residues: Glia maturation factor (138 aa).

In terms of domain architecture, ADF-H spans 3-138; that stretch reads DNQICDISNE…TEEWLKAKLK (136 aa).

The protein belongs to the actin-binding proteins ADF family. GMF subfamily. In terms of tissue distribution, in ovaries, expressed in follicular epithelium, in polar cells, migrating border cells, and centripedal cells (at protein level).

The protein localises to the cell projection. Its subcellular location is the lamellipodium. It is found in the cytoplasm. The protein resides in the perinuclear region. It localises to the nucleus. The protein localises to the cell cortex. In terms of biological role, inhibits Arp2/3-mediated actin nucleation. Together with flr, promotes Arp2/3-nucleated actin filament array disassembly. Promotes debranching. Regulates lamellipodial protrusion dynamics possibly by facilitating lamellipodial retraction. In egg chambers, enhances the retraction dynamics of cellular extensions in border cells and thus together with flr plays an important role in directional migration of border cell clusters. The polypeptide is Glia maturation factor (Drosophila melanogaster (Fruit fly)).